The following is a 494-amino-acid chain: Alpha-amylase 2 (494 aa).

Positions 1–18 (MFLAKSIVCLALLAVANA) are cleaved as a signal peptide. C46 and C102 are disulfide-bonded. 3 residues coordinate Ca(2+): N116, R165, and D174. C153 and C167 form a disulfide bridge. Chloride is bound at residue R202. D204 (nucleophile) is an active-site residue. A Ca(2+)-binding site is contributed by H208. Catalysis depends on E241, which acts as the Proton donor. Residues N304 and R343 each contribute to the chloride site. The disordered stretch occupies residues 350 to 370 (FTDTDQGPPTTDGQNIASPSF). Low complexity predominate over residues 351–363 (TDTDQGPPTTDGQ). Intrachain disulfides connect C376–C382 and C448–C460.

The protein belongs to the glycosyl hydrolase 13 family. As to quaternary structure, monomer. Ca(2+) serves as cofactor. Requires chloride as cofactor.

The enzyme catalyses Endohydrolysis of (1-&gt;4)-alpha-D-glucosidic linkages in polysaccharides containing three or more (1-&gt;4)-alpha-linked D-glucose units.. This is Alpha-amylase 2 (Amy58) from Drosophila ananassae (Fruit fly).